Reading from the N-terminus, the 875-residue chain is Lysine-specific demethylase 7A (875 aa).

The segment at 5–56 adopts a PHD-type zinc-finger fold; sequence PLYCVCRQPYDVNRFMIECDICKDWFHGSCVQVVEHHAADIDVYHCPNCEPI. A JmjC domain is found at 197–353; sequence FSDTRMSNLV…MQLRCYEMER (157 aa). Thr-246 contacts substrate. Positions 249 and 251 each coordinate Fe cation. Lys-266 contacts substrate. His-321 contacts Fe cation. Disordered stretches follow at residues 442–506, 629–710, and 742–820; these read EDDS…SRKL, SQGE…NTDC, and QGNG…ATAK. A compositionally biased stretch (polar residues) spans 448-462; sequence AVKTQGSAECSLSRS. A compositionally biased stretch (basic residues) spans 478–505; it reads QDHHHHRRRHHHHHHHHHHHHHHHHSRK. The segment covering 650–663 has biased composition (basic and acidic residues); it reads SDSKAGDSAEKCSL. Residues 688 to 697 are compositionally biased toward basic residues; sequence SHRHSHHKQA. Low complexity predominate over residues 742 to 762; that stretch reads QGNGSSTSSSSDMWDSSEPCS.

This sequence belongs to the JHDM1 histone demethylase family. JHDM1D subfamily. Fe(2+) serves as cofactor. In terms of tissue distribution, predominantly expressed in brain.

It localises to the nucleus. In terms of biological role, histone demethylase required for brain development. Specifically demethylates dimethylated 'Lys-9' and 'Lys-27' (H3K9me2 and H3K27me2, respectively) of histone H3 and monomethylated histone H4 'Lys-20' residue (H4K20Me1), thereby playing a central role in histone code. This is Lysine-specific demethylase 7A (kdm7a) from Danio rerio (Zebrafish).